Consider the following 125-residue polypeptide: Ribosome-binding factor A (125 aa).

The protein belongs to the RbfA family. Monomer. Binds 30S ribosomal subunits, but not 50S ribosomal subunits or 70S ribosomes.

The protein resides in the cytoplasm. In terms of biological role, one of several proteins that assist in the late maturation steps of the functional core of the 30S ribosomal subunit. Associates with free 30S ribosomal subunits (but not with 30S subunits that are part of 70S ribosomes or polysomes). Required for efficient processing of 16S rRNA. May interact with the 5'-terminal helix region of 16S rRNA. In Carboxydothermus hydrogenoformans (strain ATCC BAA-161 / DSM 6008 / Z-2901), this protein is Ribosome-binding factor A.